The primary structure comprises 266 residues: Tryptophan synthase alpha chain (266 aa).

Catalysis depends on proton acceptor residues Glu47 and Asp58.

The protein belongs to the TrpA family. As to quaternary structure, tetramer of two alpha and two beta chains.

The enzyme catalyses (1S,2R)-1-C-(indol-3-yl)glycerol 3-phosphate + L-serine = D-glyceraldehyde 3-phosphate + L-tryptophan + H2O. It participates in amino-acid biosynthesis; L-tryptophan biosynthesis; L-tryptophan from chorismate: step 5/5. The alpha subunit is responsible for the aldol cleavage of indoleglycerol phosphate to indole and glyceraldehyde 3-phosphate. The chain is Tryptophan synthase alpha chain from Leptospira biflexa serovar Patoc (strain Patoc 1 / Ames).